A 198-amino-acid chain; its full sequence is Peptidyl-tRNA hydrolase (198 aa).

Tyr-14 serves as a coordination point for tRNA. The Proton acceptor role is filled by His-19. TRNA-binding residues include Tyr-64, Asn-66, and Asn-112.

The protein belongs to the PTH family. As to quaternary structure, monomer.

It is found in the cytoplasm. It catalyses the reaction an N-acyl-L-alpha-aminoacyl-tRNA + H2O = an N-acyl-L-amino acid + a tRNA + H(+). Hydrolyzes ribosome-free peptidyl-tRNAs (with 1 or more amino acids incorporated), which drop off the ribosome during protein synthesis, or as a result of ribosome stalling. Its function is as follows. Catalyzes the release of premature peptidyl moieties from peptidyl-tRNA molecules trapped in stalled 50S ribosomal subunits, and thus maintains levels of free tRNAs and 50S ribosomes. This chain is Peptidyl-tRNA hydrolase, found in Beijerinckia indica subsp. indica (strain ATCC 9039 / DSM 1715 / NCIMB 8712).